We begin with the raw amino-acid sequence, 150 residues long: MQVLVDADACPAVIKDMLFRAARRAEICVTLVANQFLRTPPSPFIKAVQVPAGFDVADARIVELAEPGDLVITADIPLAAAVLDKGAHALDPRGNWFSRENIEERLSTRAMMDQLRSAGIDTGGPAPFSARDGKTFASQLDRFLARHAPR.

This sequence belongs to the UPF0178 family.

The chain is UPF0178 protein Bcen2424_1660 from Burkholderia cenocepacia (strain HI2424).